Reading from the N-terminus, the 209-residue chain is Uracil phosphoribosyltransferase (209 aa).

5-phospho-alpha-D-ribose 1-diphosphate-binding positions include Arg79, Arg104, and 131-139 (DPMLATGGS). Residues Ile194 and 199–201 (GDA) contribute to the uracil site. Asp200 is a 5-phospho-alpha-D-ribose 1-diphosphate binding site.

It belongs to the UPRTase family. It depends on Mg(2+) as a cofactor.

The catalysed reaction is UMP + diphosphate = 5-phospho-alpha-D-ribose 1-diphosphate + uracil. The protein operates within pyrimidine metabolism; UMP biosynthesis via salvage pathway; UMP from uracil: step 1/1. Its activity is regulated as follows. Allosterically activated by GTP. Its function is as follows. Catalyzes the conversion of uracil and 5-phospho-alpha-D-ribose 1-diphosphate (PRPP) to UMP and diphosphate. The chain is Uracil phosphoribosyltransferase from Enterococcus faecalis (strain ATCC 700802 / V583).